The primary structure comprises 475 residues: Methylenetetrahydrofolate--tRNA-(uracil-5-)-methyltransferase TrmFO (475 aa).

Residue 13–18 (GAGLAG) participates in FAD binding.

The protein belongs to the MnmG family. TrmFO subfamily. The cofactor is FAD.

Its subcellular location is the cytoplasm. The enzyme catalyses uridine(54) in tRNA + (6R)-5,10-methylene-5,6,7,8-tetrahydrofolate + NADH + H(+) = 5-methyluridine(54) in tRNA + (6S)-5,6,7,8-tetrahydrofolate + NAD(+). The catalysed reaction is uridine(54) in tRNA + (6R)-5,10-methylene-5,6,7,8-tetrahydrofolate + NADPH + H(+) = 5-methyluridine(54) in tRNA + (6S)-5,6,7,8-tetrahydrofolate + NADP(+). Its function is as follows. Catalyzes the folate-dependent formation of 5-methyl-uridine at position 54 (M-5-U54) in all tRNAs. The chain is Methylenetetrahydrofolate--tRNA-(uracil-5-)-methyltransferase TrmFO from Bradyrhizobium diazoefficiens (strain JCM 10833 / BCRC 13528 / IAM 13628 / NBRC 14792 / USDA 110).